The primary structure comprises 311 residues: Eukaryotic translation initiation factor 3 subunit E (311 aa).

The PCI domain occupies 100–280 (VYYNYPKGRD…MGVKSVSIHE (181 aa)).

Belongs to the eIF-3 subunit E family. Component of the eukaryotic translation initiation factor 3 (eIF-3) complex.

The protein resides in the cytoplasm. Component of the eukaryotic translation initiation factor 3 (eIF-3) complex, which is involved in protein synthesis of a specialized repertoire of mRNAs and, together with other initiation factors, stimulates binding of mRNA and methionyl-tRNAi to the 40S ribosome. The eIF-3 complex specifically targets and initiates translation of a subset of mRNAs involved in cell proliferation. The chain is Eukaryotic translation initiation factor 3 subunit E from Caenorhabditis briggsae.